A 707-amino-acid polypeptide reads, in one-letter code: UvrABC system protein C (707 aa).

The region spanning 14–94 is the GIY-YIG domain; that stretch reads AEPGCYLMKD…IKKHRPRFNV (81 aa). In terms of domain architecture, UVR spans 206–241; it reads GELVERLRGRMAGAAEGLRFEEAARLRDQLQAVERS. The disordered stretch occupies residues 655 to 707; the sequence is DAPPIAADEPSGAPAGAPGGGPAEASPEAVAAATEAEIDAALADEDASPEPAA. 2 stretches are compositionally biased toward low complexity: residues 660-670 and 677-689; these read AADEPSGAPAG and AEAS…AATE. The segment covering 690-707 has biased composition (acidic residues); it reads AEIDAALADEDASPEPAA.

This sequence belongs to the UvrC family. As to quaternary structure, interacts with UvrB in an incision complex.

The protein resides in the cytoplasm. Its function is as follows. The UvrABC repair system catalyzes the recognition and processing of DNA lesions. UvrC both incises the 5' and 3' sides of the lesion. The N-terminal half is responsible for the 3' incision and the C-terminal half is responsible for the 5' incision. This chain is UvrABC system protein C, found in Anaeromyxobacter dehalogenans (strain 2CP-1 / ATCC BAA-258).